The following is a 361-amino-acid chain: tRNA-specific 2-thiouridylase MnmA (361 aa).

Residues 8–15 and Met-34 each bind ATP; that span reads GMSGGVDS. Residues 94–96 are interaction with target base in tRNA; it reads NPD. Cys-99 functions as the Nucleophile in the catalytic mechanism. A disulfide bridge connects residues Cys-99 and Cys-195. Gly-123 contacts ATP. The tract at residues 145–147 is interaction with tRNA; sequence KDQ. Cys-195 functions as the Cysteine persulfide intermediate in the catalytic mechanism. The tract at residues 307–308 is interaction with tRNA; the sequence is RY.

Belongs to the MnmA/TRMU family.

It localises to the cytoplasm. The catalysed reaction is S-sulfanyl-L-cysteinyl-[protein] + uridine(34) in tRNA + AH2 + ATP = 2-thiouridine(34) in tRNA + L-cysteinyl-[protein] + A + AMP + diphosphate + H(+). Catalyzes the 2-thiolation of uridine at the wobble position (U34) of tRNA, leading to the formation of s(2)U34. This Legionella pneumophila subsp. pneumophila (strain Philadelphia 1 / ATCC 33152 / DSM 7513) protein is tRNA-specific 2-thiouridylase MnmA.